The sequence spans 2327 residues: Genome polyprotein (2327 aa).

In terms of domain architecture, Peptidase C28 spans 1-201; that stretch reads MNTTDCFIAV…WKANVQRKLK (201 aa). The Cytoplasmic portion of the chain corresponds to 1 to 1475; that stretch reads MNTTDCFIAV…SFVKRAFKRL (1475 aa). Catalysis depends on for leader protease activity residues C51, H148, and D163. 2 disordered regions span residues 199 to 218 and 238 to 265; these read KLKG…QSGN and QLGD…NTQN. Residue G202 is the site of N-myristoyl glycine; by host attachment. Composition is skewed to polar residues over residues 204 to 218 and 238 to 251; these read GQSS…QSGN and QLGD…SNEG. Residues 252-265 show a composition bias toward low complexity; that stretch reads STDTTSTHTTNTQN. An antigenic epitope region spans residues 787-795; it reads ALLRAATYY. The Cell attachment site signature appears at 864–866; the sequence is RGD. Residues 1184–1348 enclose the SF3 helicase domain; that stretch reads NVHIANLCKV…DGYKINNKLD (165 aa). 1212–1219 is an ATP binding site; sequence GKSGQGKS. Residues 1476–1496 lie within the membrane without spanning it; the sequence is KENFEIVALCLTLLANIVIMI. Over 1497 to 2327 the chain is Cytoplasmic; that stretch reads RETHKRQKMV…RWVNAVCGDA (831 aa). 2 stretches are compositionally biased toward basic and acidic residues: residues 1524–1533 and 1544–1558; these read KTLDEAEKNP and FRER…RDDV. The disordered stretch occupies residues 1524–1579; sequence KTLDEAEKNPLETSGASTVGFRERTLPGQKARDDVNSEPAQPTEEQPQAEGPYAGP. An O-(5'-phospho-RNA)-tyrosine mark is found at Y1576, Y1599, and Y1623. One can recognise a Peptidase C3 domain in the interval 1647–1843; that stretch reads APPTDLQKMV…YCSCVSRSML (197 aa). The active-site For protease 3C activity; Proton donor/acceptor is the H1690. Residues D1728 and C1807 each act as for protease 3C activity in the active site. A Nuclear localization signal motif is present at residues 1873–1881; it reads MRKTKLAPT. The 119-residue stretch at 2091–2209 folds into the RdRp catalytic domain; sequence RNVWDVDYSA…ASDYDLDFEA (119 aa). Residue D2195 is the For RdRp activity of the active site.

The protein belongs to the picornaviruses polyprotein family. In terms of assembly, interacts with host ISG15. As to quaternary structure, interacts (via R-G-D motif) with host ITGAV/ITGB6. Interacts with host MAVS; this interaction inhibits binding of host TRAF3 to MAVS, thereby suppressing interferon-mediated responses. Forms homooligomers. In terms of assembly, homohexamer. Interacts with host VIM. Interacts with host BECN1. As to quaternary structure, interacts with host DCTN3. Interacts with RNA-dependent RNA polymerase; this interaction allows 3B-1 to binds 2 polymerases and act as a primer. It also allows the recruitment of the RNA-dependent RNA polymerase to host membranes. In terms of assembly, interacts with RNA-dependent RNA polymerase; this interaction allows 3B-2 to act as a primer. As to quaternary structure, interacts with RNA-dependent RNA polymerase; this interaction allows 3B-3 to act as a primer. Interacts with 3B-1; this interaction allows 3B-1 to binds 2 polymerases and act as a primer. It also allows the recruitment of the RNA-dependent RNA polymerase to host membranes. Interacts with 3B-2; this interaction allows 3B-2 to act as a primer. Interacts with 3B-3; this interaction allows 3B-3 to act as a primer. In terms of processing, removes six residues from its own C-terminus, generating sLb(pro). Specific enzymatic cleavages in vivo by the viral proteases yield a variety of precursors and mature proteins. The polyprotein seems to be cotranslationally cleaved at the 2A/2B junction by a ribosomal skip from one codon to the next without formation of a peptide bond. This process would release the L-P1-2A peptide from the translational complex. Post-translationally, during virion maturation, immature virions are rendered infectious following cleavage of VP0 into VP4 and VP2. This maturation seems to be an autocatalytic event triggered by the presence of RNA in the capsid and is followed by a conformational change of the particle. In terms of processing, myristoylation is required during RNA encapsidation and formation of the mature virus particle. Uridylylated by the polymerase and covalently linked to the 5'-end of genomic RNA. These uridylylated forms act as a nucleotide-peptide primer for the polymerase.

It is found in the host nucleus. The protein localises to the host cytoplasm. It localises to the virion. The protein resides in the host endoplasmic reticulum membrane. Its subcellular location is the host cytoplasmic vesicle membrane. The catalysed reaction is Autocatalytically cleaves itself from the polyprotein of the foot-and-mouth disease virus by hydrolysis of a Lys-|-Gly bond, but then cleaves host cell initiation factor eIF-4G at bonds -Gly-|-Arg- and -Lys-|-Arg-.. It catalyses the reaction a ribonucleoside 5'-triphosphate + H2O = a ribonucleoside 5'-diphosphate + phosphate + H(+). It carries out the reaction RNA(n) + a ribonucleoside 5'-triphosphate = RNA(n+1) + diphosphate. The enzyme catalyses Selective cleavage of Gln-|-Gly bond in the poliovirus polyprotein. In other picornavirus reactions Glu may be substituted for Gln, and Ser or Thr for Gly.. Autocatalytically cleaves itself from the polyprotein at the L/VP0 junction. Also cleaves the host translation initiation factors EIF4G1 and EIF4G3, in order to shut off the capped cellular mRNA transcription. Plays a role in counteracting host innate antiviral response using diverse mechanisms. Possesses a deubiquitinase activity acting on both 'Lys-48' and 'Lys-63'-linked polyubiquitin chains. In turn, inhibits the ubiquitination and subsequent activation of key signaling molecules of type I IFN response such as host RIGI, TBK1, TRAF3 and TRAF6. Inhibits host NF-kappa-B activity by inducing a decrease in RELA mRNA levels. Cleaves a peptide bond in the C-terminus of host ISG15, resulting in the damaging of this modifier that can no longer be attached to target proteins. Also cleaves host G3BP1 and G3BP2 in order to inhibit cytoplasmic stress granules assembly. Its function is as follows. Lies on the inner surface of the capsid shell. After binding to the host receptor, the capsid undergoes conformational changes. Capsid protein VP4 is released, capsid protein VP1 N-terminus is externalized, and together, they shape a pore in the host membrane through which the viral genome is translocated into the host cell cytoplasm. After genome has been released, the channel shrinks. Functionally, forms an icosahedral capsid of pseudo T=3 symmetry with capsid proteins VP1 and VP3. The capsid is composed of 60 copies of each capsid protein organized in the form of twelve pentamers and encloses the viral positive strand RNA genome. Upon acidifcation in the endosome, dissociates into pentamers. In terms of biological role, forms an icosahedral capsid of pseudo T=3 symmetry with capsid proteins VP0 and VP3. The capsid is composed of 60 copies of each capsid protein organized in the form of twelve pentamers and encloses the viral positive strand RNA genome. Upon acidifcation in the endosome, dissociates into pentamers. Forms an icosahedral capsid of pseudo T=3 symmetry with capsid proteins VP2 and VP3. The capsid is composed of 60 copies of each capsid protein organized in the form of twelve pentamers and encloses the viral positive strand RNA genome. Mediates cell entry by attachment to an integrin receptor, usually host ITGAV/ITGB6. In addition, targets host MAVS to suppress type I IFN pathway. Upon acidifcation in the endosome, dissociates into pentamers. Its function is as follows. Mediates self-processing of the polyprotein by a translational effect termed 'ribosome skipping'. Mechanistically, 2A-mediated cleavage occurs between the C-terminal glycine and the proline of the downstream protein 2B. In the case of foot-and-mouth disease virus, the 2A oligopeptide is post-translationally 'trimmed' from the C-terminus of the upstream protein 1D by 3C proteinase. Functionally, plays an essential role in the virus replication cycle by acting as a viroporin. Creates a pore in the host endoplasmic reticulum and as a consequence releases Ca2+ in the cytoplasm of infected cell. In turn, high levels of cytoplasmic calcium may trigger membrane trafficking and transport of viral ER-associated proteins to viroplasms, sites of viral genome replication. In terms of biological role, associates with and induces structural rearrangements of intracellular membranes. Triggers host autophagy by interacting with host BECN1 and thereby promotes viral replication. Participates in viral replication and interacts with host DHX9. Displays RNA-binding, nucleotide binding and NTPase activities. May play a role in virion morphogenesis and viral RNA encapsidation by interacting with the capsid protein VP3. Plays important roles in virus replication, virulence and host range. Cooperates with host DDX56 to inhibit IRF3 nuclear translocation and subsequent type I interferon production. Its function is as follows. Covalently linked to the 5'-end of both the positive-strand and negative-strand genomic RNAs. Acts as a genome-linked replication primer. Functionally, cysteine protease that generates mature viral proteins from the precursor polyprotein. In addition to its proteolytic activity, binds to viral RNA and thus influences viral genome replication. RNA and substrate bind cooperatively to the protease. In terms of biological role, RNA-directed RNA polymerase 3D-POL replicates genomic and antigenomic RNA by recognizing replications specific signals. Covalently attaches UMP to a tyrosine of VPg, which is used to prime RNA synthesis. The positive stranded RNA genome is first replicated at virus induced membranous vesicles, creating a dsRNA genomic replication form. This dsRNA is then used as template to synthesize positive stranded RNA genomes. ss(+)RNA genomes are either translated, replicated or encapsidated. The polypeptide is Genome polyprotein (Bos taurus (Bovine)).